The sequence spans 128 residues: Histone H2A type 1-H (128 aa).

Residues 1–22 (MSGRGKQGGKARAKAKTRSSRA) form a disordered region. Serine 2 is subject to N-acetylserine. A Phosphoserine; by RPS6KA5 modification is found at serine 2. Arginine 4 carries the citrulline; alternate modification. A Symmetric dimethylarginine; by PRMT5; alternate modification is found at arginine 4. Residues lysine 6 and lysine 10 each carry the N6-(2-hydroxyisobutyryl)lysine; alternate modification. Position 6 is an N6-(beta-hydroxybutyryl)lysine; alternate (lysine 6). The span at 7-19 (QGGKARAKAKTRS) shows a compositional bias: basic residues. An N6-lactoyllysine; alternate modification is found at lysine 10. Lysine 10 carries the N6-succinyllysine; alternate modification. Residues lysine 14 and lysine 16 each participate in a glycyl lysine isopeptide (Lys-Gly) (interchain with G-Cter in ubiquitin) cross-link. The residue at position 37 (lysine 37) is an N6-(2-hydroxyisobutyryl)lysine; alternate. Lysine 37 carries the post-translational modification N6-(beta-hydroxybutyryl)lysine; alternate. Lysine 37 carries the post-translational modification N6-crotonyllysine; alternate. Residues lysine 75 and lysine 76 each carry the N6-(2-hydroxyisobutyryl)lysine modification. An N6-(2-hydroxyisobutyryl)lysine; alternate modification is found at lysine 96. Position 96 is an N6-succinyllysine; alternate (lysine 96). Lysine 96 carries the N6-glutaryllysine; alternate modification. Position 105 is an N5-methylglutamine (glutamine 105). Lysine 119 is modified (N6-(2-hydroxyisobutyryl)lysine; alternate). N6-crotonyllysine; alternate is present on residues lysine 119 and lysine 120. An N6-glutaryllysine; alternate mark is found at lysine 119 and lysine 120. Lysine 120 is subject to N6-(beta-hydroxybutyryl)lysine; alternate. Lysine 120 is covalently cross-linked (Glycyl lysine isopeptide (Lys-Gly) (interchain with G-Cter in ubiquitin); alternate). Threonine 121 is modified (phosphothreonine; by DCAF1). Lysine 126 carries the post-translational modification N6-(beta-hydroxybutyryl)lysine; alternate. At lysine 126 the chain carries N6-crotonyllysine; alternate. Lysine 126 is modified (N6-glutaryllysine; alternate).

Belongs to the histone H2A family. In terms of assembly, the nucleosome is a histone octamer containing two molecules each of H2A, H2B, H3 and H4 assembled in one H3-H4 heterotetramer and two H2A-H2B heterodimers. The octamer wraps approximately 147 bp of DNA. In terms of processing, deiminated on Arg-4 in granulocytes upon calcium entry. Monoubiquitination of Lys-120 (H2AK119Ub) by RING1, TRIM37 and RNF2/RING2 complex gives a specific tag for epigenetic transcriptional repression and participates in X chromosome inactivation of female mammals. It is involved in the initiation of both imprinted and random X inactivation. Ubiquitinated H2A is enriched in inactive X chromosome chromatin. Ubiquitination of H2A functions downstream of methylation of 'Lys-27' of histone H3 (H3K27me). H2AK119Ub by RNF2/RING2 can also be induced by ultraviolet and may be involved in DNA repair. Following DNA double-strand breaks (DSBs), it is ubiquitinated through 'Lys-63' linkage of ubiquitin moieties by the E2 ligase UBE2N and the E3 ligases RNF8 and RNF168, leading to the recruitment of repair proteins to sites of DNA damage. Ubiquitination at Lys-14 and Lys-16 (H2AK13Ub and H2AK15Ub, respectively) in response to DNA damage is initiated by RNF168 that mediates monoubiquitination at these 2 sites, and 'Lys-63'-linked ubiquitin are then conjugated to monoubiquitin; RNF8 is able to extend 'Lys-63'-linked ubiquitin chains in vitro. H2AK119Ub and ionizing radiation-induced 'Lys-63'-linked ubiquitination (H2AK13Ub and H2AK15Ub) are distinct events. Post-translationally, phosphorylation on Ser-2 (H2AS1ph) is enhanced during mitosis. Phosphorylation on Ser-2 by RPS6KA5/MSK1 directly represses transcription. Acetylation of H3 inhibits Ser-2 phosphorylation by RPS6KA5/MSK1. Phosphorylation at Thr-121 (H2AT120ph) by DCAF1 is present in the regulatory region of many tumor suppresor genes and down-regulates their transcription. In terms of processing, symmetric dimethylation on Arg-4 by the PRDM1/PRMT5 complex may play a crucial role in the germ-cell lineage. Glutamine methylation at Gln-105 (H2AQ104me) by FBL is specifically dedicated to polymerase I. It is present at 35S ribosomal DNA locus and impairs binding of the FACT complex. Post-translationally, crotonylation (Kcr) is specifically present in male germ cells and marks testis-specific genes in post-meiotic cells, including X-linked genes that escape sex chromosome inactivation in haploid cells. Crotonylation marks active promoters and enhancers and confers resistance to transcriptional repressors. It is also associated with post-meiotically activated genes on autosomes. In terms of processing, hydroxybutyrylation of histones is induced by starvation. Lactylated in macrophages by EP300/P300 by using lactoyl-CoA directly derived from endogenous or exogenous lactate, leading to stimulates gene transcription.

Its subcellular location is the nucleus. The protein localises to the chromosome. Its function is as follows. Core component of nucleosome. Nucleosomes wrap and compact DNA into chromatin, limiting DNA accessibility to the cellular machineries which require DNA as a template. Histones thereby play a central role in transcription regulation, DNA repair, DNA replication and chromosomal stability. DNA accessibility is regulated via a complex set of post-translational modifications of histones, also called histone code, and nucleosome remodeling. This is Histone H2A type 1-H from Mus musculus (Mouse).